The following is a 285-amino-acid chain: 4-diphosphocytidyl-2-C-methyl-D-erythritol kinase (285 aa).

Lys-11 is a catalytic residue. Pro-95 to Ala-105 contacts ATP. Asp-137 is an active-site residue.

It belongs to the GHMP kinase family. IspE subfamily.

The enzyme catalyses 4-CDP-2-C-methyl-D-erythritol + ATP = 4-CDP-2-C-methyl-D-erythritol 2-phosphate + ADP + H(+). It functions in the pathway isoprenoid biosynthesis; isopentenyl diphosphate biosynthesis via DXP pathway; isopentenyl diphosphate from 1-deoxy-D-xylulose 5-phosphate: step 3/6. Its function is as follows. Catalyzes the phosphorylation of the position 2 hydroxy group of 4-diphosphocytidyl-2C-methyl-D-erythritol. This Paramagnetospirillum magneticum (strain ATCC 700264 / AMB-1) (Magnetospirillum magneticum) protein is 4-diphosphocytidyl-2-C-methyl-D-erythritol kinase.